A 280-amino-acid polypeptide reads, in one-letter code: Probable cell division protein WhiA (280 aa).

A DNA-binding region (H-T-H motif) is located at residues S246–Q279.

It belongs to the WhiA family.

Its function is as follows. Involved in cell division and chromosome segregation. In Mycoplasma pneumoniae (strain ATCC 29342 / M129 / Subtype 1) (Mycoplasmoides pneumoniae), this protein is Probable cell division protein WhiA.